The primary structure comprises 419 residues: UDP-N-acetylglucosamine 1-carboxyvinyltransferase 2 (419 aa).

22–23 (KN) is a binding site for phosphoenolpyruvate. Position 92 (R92) interacts with UDP-N-acetyl-alpha-D-glucosamine. The active-site Proton donor is the C116. C116 is subject to 2-(S-cysteinyl)pyruvic acid O-phosphothioketal. UDP-N-acetyl-alpha-D-glucosamine is bound by residues 121 to 125 (RPIDL), D306, and I328.

It belongs to the EPSP synthase family. MurA subfamily.

The protein localises to the cytoplasm. It catalyses the reaction phosphoenolpyruvate + UDP-N-acetyl-alpha-D-glucosamine = UDP-N-acetyl-3-O-(1-carboxyvinyl)-alpha-D-glucosamine + phosphate. Its pathway is cell wall biogenesis; peptidoglycan biosynthesis. Functionally, cell wall formation. Adds enolpyruvyl to UDP-N-acetylglucosamine. This Streptococcus pyogenes serotype M1 protein is UDP-N-acetylglucosamine 1-carboxyvinyltransferase 2.